Consider the following 139-residue polypeptide: Putative pre-16S rRNA nuclease (139 aa).

It belongs to the YqgF nuclease family.

The protein resides in the cytoplasm. In terms of biological role, could be a nuclease involved in processing of the 5'-end of pre-16S rRNA. This chain is Putative pre-16S rRNA nuclease, found in Haemophilus influenzae (strain PittEE).